Consider the following 879-residue polypeptide: MEMNMDMDMDMELASIVSSLSALSHSNNNGGQAAAAGIVNGGAAGSQQIGGFRRSSFTTANEVDSEILLLHGSSESSPIFKKTALSVGTAPPFSTNSKKFFGNGGNYYQYRSTDTASLSSASYNNYHTHHTAANLGKNNKVNHLLGQYSASIAGPVYYNGNDNNNSGGEGFFEKFGKSLIDGTRELESQDRPDAVNTQSQFISKSVSNASLDTQNTFEQNVESDKNFNKLNRNTTNSGSLYHSSSNSGSSASLESENAHYPKRNIWNVANTPVFRPSNNPAAVGATNVALPNQQDGPANNNFPPYMNGFPPNQFHQGPHYQNFPNYLIGSPSNFISQMISVQIPANEDTEDSNGKKKKKANRPSSVSSPSSPPNNSPFPFAYPNPMMFMPPPPLSAPQQQQQQQQQQQQEDQQQQQQQENPYIYYPTPNPIPVKMPKDEKTFKKRNNKNHPANNSNNANKQANPYLENSIPTKNTSKKNASSKSNESTANNHKSHSHSHPHSQSLQQQQQTYHRSPLLEQLRNSSSDKNSNSNMSLKDIFGHSLEFCKDQHGSRFIQRELATSPASEKEVIFNEIRDDAIELSNDVFGNYVIQKFFEFGSKIQKNTLVDQFKGNMKQLSLQMYACRVIQKALEYIDSNQRIELVLELSDSVLQMIKDQNGNHVIQKAIETIPIEKLPFILSSLTGHIYHLSTHSYGCRVIQRLLEFGSSEDQESILNELKDFIPYLIQDQYGNYVIQYVLQQDQFTNKEMVDIKQEIIETVANNVVEYSKHKFASNVVEKSILYGSKNQKDLIISKILPRDKNHALNLEDDSPMILMIKDQFANYVIQKLVNVSEGEGKKLIVIAIRAYLDKLNKSNSLGNRHLASVEKLAALVENAEV.

Thr83 bears the Phosphothreonine mark. Phosphoserine occurs at positions 207 and 210. Disordered stretches follow at residues 222-256, 344-417, and 443-512; these read ESDK…LESE, PANE…QQQQ, and KKRN…QQTY. The span at 237–255 shows a compositional bias: low complexity; that stretch reads SGSLYHSSSNSGSSASLES. The span at 370 to 395 shows a compositional bias: pro residues; the sequence is SSPPNNSPFPFAYPNPMMFMPPPPLS. 4 stretches are compositionally biased toward low complexity: residues 398–417, 449–463, 472–491, and 501–512; these read QQQQ…QQQQ, NHPA…KQAN, TKNT…TANN, and HSQSLQQQQQTY. One can recognise a PUM-HD domain in the interval 513 to 871; sequence HRSPLLEQLR…RHLASVEKLA (359 aa). Pumilio repeat units follow at residues 538-573, 574-609, 610-645, 646-681, 682-717, 718-759, 760-795, and 807-844; these read DIFG…VIFN, EIRD…TLVD, QFKG…ELVL, ELSD…FILS, SLTG…SILN, ELKD…EIIE, TVAN…LIIS, and NLED…LIVI.

The protein belongs to the PUF3 family.

The protein localises to the mitochondrion outer membrane. The protein resides in the cytoplasm. RNA-binding protein involved in post-transcriptional regulation. Negatively regulates expression of COX17 by binding to the 3'-UTR of COX17 mRNA. Promotes decay of COX17 mRNA by enhancing its rate of deadenylation and subsequent turnover. Predominantly binds to mRNAs encoding mitochondrial proteins and localizes them to the vicinity of mitochondria for translation. Regulates mitochondrial biogenesis, motility and morphology. The chain is mRNA-binding protein PUF3 (PUF3) from Saccharomyces cerevisiae (strain ATCC 204508 / S288c) (Baker's yeast).